We begin with the raw amino-acid sequence, 784 residues long: Probable phosphoketolase (784 aa).

It belongs to the XFP family. The cofactor is thiamine diphosphate.

The polypeptide is Probable phosphoketolase (Rhodopseudomonas palustris (strain BisB5)).